The primary structure comprises 573 residues: Adenine deaminase 2 (573 aa).

The protein belongs to the metallo-dependent hydrolases superfamily. Adenine deaminase family. Requires Mn(2+) as cofactor.

It carries out the reaction adenine + H2O + H(+) = hypoxanthine + NH4(+). The sequence is that of Adenine deaminase 2 from Shouchella clausii (strain KSM-K16) (Alkalihalobacillus clausii).